Here is a 477-residue protein sequence, read N- to C-terminus: S-triazine hydrolase (477 aa).

Low complexity-rich tracts occupy residues 38 to 73 (SPTT…KSSS) and 120 to 132 (PLSS…DPTT). Disordered regions lie at residues 38-77 (SPTT…GVVH) and 120-143 (PLSS…GSPF).

It belongs to the metallo-dependent hydrolases superfamily. ATZ/TRZ family.

The protein operates within xenobiotic degradation; melamine degradation. Its function is as follows. Hydrolytic deamination of the S-triazine substrate melamine. The chain is S-triazine hydrolase (trzA) from Gordonia rubripertincta (Rhodococcus corallinus).